We begin with the raw amino-acid sequence, 178 residues long: Major non-capsid protein (178 aa).

It belongs to the tenuiviruses NCP family.

Its subcellular location is the host cytoplasm. Functionally, induces the formation of large intracellular inclusion body, organized in amorphous and crystalline arrays. Presumably the main cause of the stripe disease observed in host. This is Major non-capsid protein from Rice stripe virus (isolate T) (RSV).